The primary structure comprises 609 residues: D-apionate lactonase (609 aa).

It carries out the reaction D-apionolactone + H2O = D-apionate + H(+). It participates in carbohydrate metabolism. Functionally, involved in catabolism of D-apiose. Hydrolyzes D-apionolactone to D-apionate. The sequence is that of D-apionate lactonase from Brucella anthropi (strain ATCC 49188 / DSM 6882 / CCUG 24695 / JCM 21032 / LMG 3331 / NBRC 15819 / NCTC 12168 / Alc 37) (Ochrobactrum anthropi).